The primary structure comprises 209 residues: Ribosomal RNA large subunit methyltransferase E (209 aa).

S-adenosyl-L-methionine-binding residues include Gly-63, Trp-65, Asp-83, Asp-99, and Asp-124. The active-site Proton acceptor is the Lys-164.

It belongs to the class I-like SAM-binding methyltransferase superfamily. RNA methyltransferase RlmE family.

Its subcellular location is the cytoplasm. The enzyme catalyses uridine(2552) in 23S rRNA + S-adenosyl-L-methionine = 2'-O-methyluridine(2552) in 23S rRNA + S-adenosyl-L-homocysteine + H(+). Specifically methylates the uridine in position 2552 of 23S rRNA at the 2'-O position of the ribose in the fully assembled 50S ribosomal subunit. This chain is Ribosomal RNA large subunit methyltransferase E, found in Shigella dysenteriae serotype 1 (strain Sd197).